The following is a 458-amino-acid chain: Gamma aminobutyrate transaminase 2 (458 aa).

114–115 (GS) is a pyridoxal 5'-phosphate binding site. Tyrosine 147 is a binding site for substrate. Position 254 (aspartate 254) interacts with pyridoxal 5'-phosphate. Lysine 283 lines the substrate pocket. An N6-(pyridoxal phosphate)lysine modification is found at lysine 283.

Belongs to the class-III pyridoxal-phosphate-dependent aminotransferase family. In terms of tissue distribution, expressed in leaves, roots, stems, flowers and fruits. Expressed in carpels, but not in stamens.

It localises to the cytoplasm. It carries out the reaction 4-aminobutanoate + pyruvate = succinate semialdehyde + L-alanine. The enzyme catalyses 4-aminobutanoate + glyoxylate = succinate semialdehyde + glycine. In terms of biological role, transaminase that degrades gamma-amino butyric acid (GABA) and uses pyruvate or glyoxylate as amino-group acceptor. Cannot use beta-alanine, ornithine, acetylornithine, serine, glycine, asparagine, glutamine, glutamate, valine, leucine, isoleucine, methionine, phenylalanine, histidine, lysine, arginine, aspartate, threonine, tyrosine, tryptophan, proline, or cysteine as amino donors. May be responsible for establishing the GABA gradient in the carpel. The protein is Gamma aminobutyrate transaminase 2 (GABA-TP2) of Solanum lycopersicum (Tomato).